The following is a 324-amino-acid chain: Methionyl-tRNA formyltransferase (324 aa).

114–117 (SLLP) is a binding site for (6S)-5,6,7,8-tetrahydrofolate.

The protein belongs to the Fmt family.

The enzyme catalyses L-methionyl-tRNA(fMet) + (6R)-10-formyltetrahydrofolate = N-formyl-L-methionyl-tRNA(fMet) + (6S)-5,6,7,8-tetrahydrofolate + H(+). Its function is as follows. Attaches a formyl group to the free amino group of methionyl-tRNA(fMet). The formyl group appears to play a dual role in the initiator identity of N-formylmethionyl-tRNA by promoting its recognition by IF2 and preventing the misappropriation of this tRNA by the elongation apparatus. The polypeptide is Methionyl-tRNA formyltransferase (Parabacteroides distasonis (strain ATCC 8503 / DSM 20701 / CIP 104284 / JCM 5825 / NCTC 11152)).